A 213-amino-acid chain; its full sequence is Redox-sensing transcriptional repressor Rex (213 aa).

A DNA-binding region (H-T-H motif) is located at residues 18 to 57 (LYYRIFKRFHAEKIERANSKQIAEAIGIDSATVRRDFSYF). Residue 92-97 (GIGNMG) participates in NAD(+) binding.

It belongs to the transcriptional regulatory Rex family. Homodimer.

It is found in the cytoplasm. Functionally, modulates transcription in response to changes in cellular NADH/NAD(+) redox state. Binds to the promoter of the aldehyde-alcohol dehydrogenase adhE gene. Functions as a redox-dependent repressor of adhE expression. This is Redox-sensing transcriptional repressor Rex from Streptococcus pneumoniae serotype 19F (strain G54).